Here is a 320-residue protein sequence, read N- to C-terminus: HPr kinase/phosphorylase (320 aa).

Catalysis depends on residues histidine 141 and lysine 162. 156–163 serves as a coordination point for ATP; sequence GHSGLGKS. Serine 163 is a binding site for Mg(2+). Aspartate 180 functions as the Proton acceptor; for phosphorylation activity. Proton donor; for dephosphorylation activity in the catalytic mechanism. Residues 204–213 are important for the catalytic mechanism of both phosphorylation and dephosphorylation; sequence LEVRGLGILN. Glutamate 205 lines the Mg(2+) pocket. Residue arginine 248 is part of the active site. The important for the catalytic mechanism of dephosphorylation stretch occupies residues 269–274; that stretch reads PVAVGR.

This sequence belongs to the HPrK/P family. Homohexamer. It depends on Mg(2+) as a cofactor.

The enzyme catalyses [HPr protein]-L-serine + ATP = [HPr protein]-O-phospho-L-serine + ADP + H(+). It catalyses the reaction [HPr protein]-O-phospho-L-serine + phosphate + H(+) = [HPr protein]-L-serine + diphosphate. In terms of biological role, catalyzes the ATP- as well as the pyrophosphate-dependent phosphorylation of a specific serine residue in HPr, a phosphocarrier protein of the phosphoenolpyruvate-dependent sugar phosphotransferase system (PTS). HprK/P also catalyzes the pyrophosphate-producing, inorganic phosphate-dependent dephosphorylation (phosphorolysis) of seryl-phosphorylated HPr (P-Ser-HPr). In Neisseria meningitidis serogroup C / serotype 2a (strain ATCC 700532 / DSM 15464 / FAM18), this protein is HPr kinase/phosphorylase.